The sequence spans 372 residues: Anhydro-N-acetylmuramic acid kinase (372 aa).

18–25 (GTSLDGID) is a binding site for ATP.

This sequence belongs to the anhydro-N-acetylmuramic acid kinase family.

The enzyme catalyses 1,6-anhydro-N-acetyl-beta-muramate + ATP + H2O = N-acetyl-D-muramate 6-phosphate + ADP + H(+). Its pathway is amino-sugar metabolism; 1,6-anhydro-N-acetylmuramate degradation. It participates in cell wall biogenesis; peptidoglycan recycling. In terms of biological role, catalyzes the specific phosphorylation of 1,6-anhydro-N-acetylmuramic acid (anhMurNAc) with the simultaneous cleavage of the 1,6-anhydro ring, generating MurNAc-6-P. Is required for the utilization of anhMurNAc either imported from the medium or derived from its own cell wall murein, and thus plays a role in cell wall recycling. In Thiobacillus denitrificans (strain ATCC 25259 / T1), this protein is Anhydro-N-acetylmuramic acid kinase.